We begin with the raw amino-acid sequence, 299 residues long: Acetylglutamate kinase (299 aa).

Substrate contacts are provided by residues 68–69, R90, and N194; that span reads GG.

This sequence belongs to the acetylglutamate kinase family. ArgB subfamily.

It is found in the cytoplasm. The enzyme catalyses N-acetyl-L-glutamate + ATP = N-acetyl-L-glutamyl 5-phosphate + ADP. It functions in the pathway amino-acid biosynthesis; L-arginine biosynthesis; N(2)-acetyl-L-ornithine from L-glutamate: step 2/4. Its function is as follows. Catalyzes the ATP-dependent phosphorylation of N-acetyl-L-glutamate. This chain is Acetylglutamate kinase, found in Psychrobacter cryohalolentis (strain ATCC BAA-1226 / DSM 17306 / VKM B-2378 / K5).